The primary structure comprises 674 residues: Anosmin-1 (674 aa).

The signal sequence occupies residues 1-21 (MVRRAPGASLALLLWVTAVSC). 4 cysteine pairs are disulfide-bonded: C47–C71, C80–C99, C84–C95, and C110–C114. Residue N65 is glycosylated (N-linked (GlcNAc...) asparagine). Positions 121 to 170 (LSVKQGDCPAPEKASGFAAACFESCEADSECSGVKKCCSNGCGHTCQVPK) constitute a WAP domain. 4 consecutive Fibronectin type-III domains span residues 180 to 281 (PRKE…SKDP), 286 to 392 (APSN…TTQD), 418 to 515 (RRKP…FFVT), and 545 to 652 (KPEN…DLPP). Residues N203 and N294 are each glycosylated (N-linked (GlcNAc...) asparagine). The span at 388 to 402 (STTQDNRNNNEQTSV) shows a compositional bias: polar residues. A disordered region spans residues 388 to 413 (STTQDNRNNNEQTSVEKPPKGVVDPY). N-linked (GlcNAc...) asparagine glycans are attached at residues N465, N548, and N559. The tract at residues 655–674 (PHRPHLKHHPHRYKPPPEKY) is disordered. Residues 656 to 668 (HRPHLKHHPHRYK) are compositionally biased toward basic residues.

It is found in the cell surface. In terms of biological role, may be an adhesion-like molecule with anti-protease activity. This chain is Anosmin-1, found in Coturnix japonica (Japanese quail).